The chain runs to 273 residues: Small ribosomal subunit protein uS3 (273 aa).

One can recognise a KH type-2 domain in the interval 43-111; that stretch reads IRQLMSTGME…QVQLNILEVK (69 aa). The segment covering 218–227 has biased composition (low complexity); the sequence is QQAAAAPSRG. Residues 218–273 form a disordered region; it reads QQAAAAPSRGRAGDRPGRPGGDRRRRNDRPAAEAAPAAVEAPAAEAAAPAAEGGQA. Residues 228–239 show a composition bias toward basic and acidic residues; sequence RAGDRPGRPGGD. Residues 249 to 273 show a composition bias toward low complexity; it reads AEAAPAAVEAPAAEAAAPAAEGGQA.

It belongs to the universal ribosomal protein uS3 family. Part of the 30S ribosomal subunit. Forms a tight complex with proteins S10 and S14.

Its function is as follows. Binds the lower part of the 30S subunit head. Binds mRNA in the 70S ribosome, positioning it for translation. The polypeptide is Small ribosomal subunit protein uS3 (Paenarthrobacter aurescens (strain TC1)).